The primary structure comprises 218 residues: UPF0711 protein C18orf21 homolog (218 aa).

Phosphoserine is present on serine 126. Residues 130–146 (ASAASKASPKTPKRAAA) are compositionally biased toward low complexity. Residues 130–192 (ASAASKASPK…NGSKRKKHFS (63 aa)) are disordered. At threonine 140 the chain carries Phosphothreonine. Polar residues predominate over residues 147–156 (GSTNISQSVH). Residues 161–172 (RSPSSTVRTPTS) show a composition bias toward low complexity. The segment covering 173–183 (GQSTPICSSRN) has biased composition (polar residues).

The protein belongs to the UPF0711 family.

The protein is UPF0711 protein C18orf21 homolog of Rattus norvegicus (Rat).